Reading from the N-terminus, the 317-residue chain is 4-diphosphocytidyl-2-C-methyl-D-erythritol kinase (317 aa).

K11 is an active-site residue. Position 99-109 (99-109 (PVAAGLAGGST)) interacts with ATP. D141 is an active-site residue.

The protein belongs to the GHMP kinase family. IspE subfamily.

The enzyme catalyses 4-CDP-2-C-methyl-D-erythritol + ATP = 4-CDP-2-C-methyl-D-erythritol 2-phosphate + ADP + H(+). The protein operates within isoprenoid biosynthesis; isopentenyl diphosphate biosynthesis via DXP pathway; isopentenyl diphosphate from 1-deoxy-D-xylulose 5-phosphate: step 3/6. Its function is as follows. Catalyzes the phosphorylation of the position 2 hydroxy group of 4-diphosphocytidyl-2C-methyl-D-erythritol. This chain is 4-diphosphocytidyl-2-C-methyl-D-erythritol kinase, found in Trichormus variabilis (strain ATCC 29413 / PCC 7937) (Anabaena variabilis).